Reading from the N-terminus, the 111-residue chain is uncharacterized protein (111 aa).

The next 2 helical transmembrane spans lie at 27–47 (IIVLFCLLCIIVTLGVIGYKF) and 80–100 (IFTGIYAVLVGVFFISVISAI).

Its subcellular location is the membrane. This is an uncharacterized protein from Acanthamoeba polyphaga (Amoeba).